We begin with the raw amino-acid sequence, 448 residues long: UDP-N-acetylmuramoylalanine--D-glutamate ligase (448 aa).

Residues Lys-17, Ser-18, Thr-38, Arg-39, and Gly-78 each contribute to the UDP-N-acetyl-alpha-D-muramoyl-L-alanine site. 116–122 (GSNAKST) contacts ATP. Residues Ala-119, Lys-120, Ser-121, and Thr-122 each contribute to the ADP site. Residues Asn-143 and His-188 each coordinate UDP-N-acetyl-alpha-D-muramoyl-L-alanine. ADP is bound by residues Asn-278, Arg-309, Asp-324, and Lys-326.

This sequence belongs to the MurCDEF family.

Its subcellular location is the cytoplasm. It catalyses the reaction UDP-N-acetyl-alpha-D-muramoyl-L-alanine + D-glutamate + ATP = UDP-N-acetyl-alpha-D-muramoyl-L-alanyl-D-glutamate + ADP + phosphate + H(+). The protein operates within cell wall biogenesis; peptidoglycan biosynthesis. Its function is as follows. Involved in cell wall formation. Catalyzes the addition of D-glutamate to the peptidoglycan precursor UDP-N-acetylmuramoyl-L-alanine (UMA). The chain is UDP-N-acetylmuramoylalanine--D-glutamate ligase from Pseudomonas aeruginosa (strain ATCC 15692 / DSM 22644 / CIP 104116 / JCM 14847 / LMG 12228 / 1C / PRS 101 / PAO1).